The chain runs to 346 residues: Phosphoribosylformylglycinamidine cyclo-ligase (346 aa).

This sequence belongs to the AIR synthase family.

It localises to the cytoplasm. It catalyses the reaction 2-formamido-N(1)-(5-O-phospho-beta-D-ribosyl)acetamidine + ATP = 5-amino-1-(5-phospho-beta-D-ribosyl)imidazole + ADP + phosphate + H(+). It participates in purine metabolism; IMP biosynthesis via de novo pathway; 5-amino-1-(5-phospho-D-ribosyl)imidazole from N(2)-formyl-N(1)-(5-phospho-D-ribosyl)glycinamide: step 2/2. The protein is Phosphoribosylformylglycinamidine cyclo-ligase of Shewanella piezotolerans (strain WP3 / JCM 13877).